We begin with the raw amino-acid sequence, 244 residues long: L-xylulose reductase (244 aa).

Methionine 1 is subject to N-acetylmethionine. 11-39 (LVTGAGKGIGRSIVKALHAAGARVVAVSR) is an NADP(+) binding site. The residue at position 21 (arginine 21) is an Omega-N-methylarginine. Serine 46 bears the Phosphoserine mark. Serine 136 is a binding site for substrate. Tyrosine 149 serves as the catalytic Proton acceptor. The active site involves lysine 153.

It belongs to the short-chain dehydrogenases/reductases (SDR) family. In terms of assembly, homotetramer.

It is found in the membrane. It carries out the reaction xylitol + NADP(+) = L-xylulose + NADPH + H(+). Functionally, catalyzes the NADPH-dependent reduction of several pentoses, tetroses, trioses, alpha-dicarbonyl compounds and L-xylulose. Participates in the uronate cycle of glucose metabolism. May play a role in the water absorption and cellular osmoregulation in the proximal renal tubules by producing xylitol, an osmolyte, thereby preventing osmolytic stress from occurring in the renal tubules. The chain is L-xylulose reductase (DCXR) from Bos taurus (Bovine).